A 122-amino-acid polypeptide reads, in one-letter code: Small ribosomal subunit protein uS13 (122 aa).

Residues Asn95–Lys122 are disordered.

This sequence belongs to the universal ribosomal protein uS13 family. In terms of assembly, part of the 30S ribosomal subunit. Forms a loose heterodimer with protein S19. Forms two bridges to the 50S subunit in the 70S ribosome.

Located at the top of the head of the 30S subunit, it contacts several helices of the 16S rRNA. In the 70S ribosome it contacts the 23S rRNA (bridge B1a) and protein L5 of the 50S subunit (bridge B1b), connecting the 2 subunits; these bridges are implicated in subunit movement. Contacts the tRNAs in the A and P-sites. This Methylobacterium nodulans (strain LMG 21967 / CNCM I-2342 / ORS 2060) protein is Small ribosomal subunit protein uS13.